A 76-amino-acid chain; its full sequence is MTKRSNLDSNHIIYRSEELLGAASNRYNITVRVAKRAKENRSEDFDSIDDPNMKPAIRAIIEMSDELTRPEIISDN.

Belongs to the RNA polymerase subunit omega family. In terms of assembly, in cyanobacteria the RNAP catalytic core is composed of 2 alpha, 1 beta, 1 beta', 1 gamma and 1 omega subunit. When a sigma factor is associated with the core the holoenzyme is formed, which can initiate transcription.

It carries out the reaction RNA(n) + a ribonucleoside 5'-triphosphate = RNA(n+1) + diphosphate. Functionally, promotes RNA polymerase assembly. Latches the N- and C-terminal regions of the beta' subunit thereby facilitating its interaction with the beta and alpha subunits. In Synechocystis sp. (strain ATCC 27184 / PCC 6803 / Kazusa), this protein is DNA-directed RNA polymerase subunit omega (rpoZ).